A 454-amino-acid polypeptide reads, in one-letter code: MLNILEVHETNQMIEQEKLDVRTITMGIDLMDCVSTDLQTTCDLIYNKITSYAKDLVSTGESIERDFGIPIVNKRITVTPIALVGASCCKTSADFVQIAHALDRAAKTVGVDLIGGYSALVSKSMTPAEELLIRSLPAALSETDIVCSSVNVGSTKTGIDMNSVELLGHIIKEIAEATADIDSYGCVKFVAFCNAPDDNPFMAGGFHGVTEGDAVINVGVSGPGVVSRALDAAKGKDFEFLCETIKRTAFKITRVGQLVAQEASKRLGIPFGIIDLSLAPTPAVGDSVGEVLEKIGLAQVGAPGTTAALAMLNDQVKKGGIMASSYVGGLSGAFIPVSEDKNMIDAAESGCLTIEKLEAMTCVCSVGLDMIAIPGDTTASTISGIIADEAAIGMVNQKTTAVRVIPVVGKTVGQMANFGGLMGYAPIMPVNTASCEAFVTRGGRIPAPIHSFKN.

It belongs to the UPF0210 family. Homodimer.

This Bifidobacterium animalis subsp. lactis (strain AD011) protein is UPF0210 protein BLA_0552.